We begin with the raw amino-acid sequence, 241 residues long: 1-(5-phosphoribosyl)-5-[(5-phosphoribosylamino)methylideneamino] imidazole-4-carboxamide isomerase (241 aa).

Asp-8 (proton acceptor) is an active-site residue. Asp-129 serves as the catalytic Proton donor.

The protein belongs to the HisA/HisF family.

The protein localises to the cytoplasm. The catalysed reaction is 1-(5-phospho-beta-D-ribosyl)-5-[(5-phospho-beta-D-ribosylamino)methylideneamino]imidazole-4-carboxamide = 5-[(5-phospho-1-deoxy-D-ribulos-1-ylimino)methylamino]-1-(5-phospho-beta-D-ribosyl)imidazole-4-carboxamide. The protein operates within amino-acid biosynthesis; L-histidine biosynthesis; L-histidine from 5-phospho-alpha-D-ribose 1-diphosphate: step 4/9. The sequence is that of 1-(5-phosphoribosyl)-5-[(5-phosphoribosylamino)methylideneamino] imidazole-4-carboxamide isomerase from Caulobacter sp. (strain K31).